The following is a 189-amino-acid chain: Elongation factor P (189 aa).

The protein belongs to the elongation factor P family.

Its subcellular location is the cytoplasm. It participates in protein biosynthesis; polypeptide chain elongation. Functionally, involved in peptide bond synthesis. Stimulates efficient translation and peptide-bond synthesis on native or reconstituted 70S ribosomes in vitro. Probably functions indirectly by altering the affinity of the ribosome for aminoacyl-tRNA, thus increasing their reactivity as acceptors for peptidyl transferase. The sequence is that of Elongation factor P from Pseudomonas syringae pv. syringae (strain B728a).